The following is a 137-amino-acid chain: Large ribosomal subunit protein uL16 (137 aa).

This sequence belongs to the universal ribosomal protein uL16 family. In terms of assembly, part of the 50S ribosomal subunit.

Its function is as follows. Binds 23S rRNA and is also seen to make contacts with the A and possibly P site tRNAs. This chain is Large ribosomal subunit protein uL16, found in Methylococcus capsulatus (strain ATCC 33009 / NCIMB 11132 / Bath).